We begin with the raw amino-acid sequence, 238 residues long: Ribosomal RNA small subunit methyltransferase G (238 aa).

S-adenosyl-L-methionine is bound by residues G79, F84, E102–T104, I130–E131, and R149.

The protein belongs to the methyltransferase superfamily. RNA methyltransferase RsmG family.

The protein localises to the cytoplasm. Specifically methylates the N7 position of a guanine in 16S rRNA. In Chloroflexus aggregans (strain MD-66 / DSM 9485), this protein is Ribosomal RNA small subunit methyltransferase G.